The primary structure comprises 132 residues: Small ribosomal subunit protein uS8 (132 aa).

Belongs to the universal ribosomal protein uS8 family. In terms of assembly, part of the 30S ribosomal subunit. Contacts proteins S5 and S12.

Functionally, one of the primary rRNA binding proteins, it binds directly to 16S rRNA central domain where it helps coordinate assembly of the platform of the 30S subunit. This Xanthomonas oryzae pv. oryzae (strain MAFF 311018) protein is Small ribosomal subunit protein uS8.